The following is a 332-amino-acid chain: 5-formaminoimidazole-4-carboxamide-1-(beta)-D-ribofuranosyl 5'-monophosphate synthetase (332 aa).

Residues H9 and S72 each contribute to the 5-amino-1-(5-phospho-beta-D-ribosyl)imidazole-4-carboxamide site. The 231-residue stretch at 93–323 (RNLFPWESNQ…IGREINLAIQ (231 aa)) folds into the ATP-grasp domain. Residues 123–183 (PEDV…IPMY) and E205 contribute to the ATP site. N229 contacts 5-amino-1-(5-phospho-beta-D-ribosyl)imidazole-4-carboxamide. Mg(2+) contacts are provided by E268 and E281.

The protein belongs to the phosphohexose mutase family. The cofactor is Mg(2+). It depends on Mn(2+) as a cofactor.

It catalyses the reaction 5-amino-1-(5-phospho-beta-D-ribosyl)imidazole-4-carboxamide + formate + ATP = 5-formamido-1-(5-phospho-D-ribosyl)imidazole-4-carboxamide + ADP + phosphate. Its pathway is purine metabolism; IMP biosynthesis via de novo pathway; 5-formamido-1-(5-phospho-D-ribosyl)imidazole-4-carboxamide from 5-amino-1-(5-phospho-D-ribosyl)imidazole-4-carboxamide (formate route): step 1/1. Catalyzes the ATP- and formate-dependent formylation of 5-aminoimidazole-4-carboxamide-1-beta-d-ribofuranosyl 5'-monophosphate (AICAR) to 5-formaminoimidazole-4-carboxamide-1-beta-d-ribofuranosyl 5'-monophosphate (FAICAR) in the absence of folates. This Metallosphaera sedula (strain ATCC 51363 / DSM 5348 / JCM 9185 / NBRC 15509 / TH2) protein is 5-formaminoimidazole-4-carboxamide-1-(beta)-D-ribofuranosyl 5'-monophosphate synthetase.